The chain runs to 130 residues: Lipoprotein LpqS (130 aa).

An N-terminal signal peptide occupies residues 1–23 (MVWMRSAIVAVALGVTVAAVAAA). Cysteine 24 is lipidated: N-palmitoyl cysteine. A lipid anchor (S-diacylglycerol cysteine) is attached at cysteine 24.

It is found in the cell membrane. May play an essential role in M.tuberculosis replication and survival inside the host cell. The protein is Lipoprotein LpqS of Mycobacterium tuberculosis (strain ATCC 25618 / H37Rv).